The primary structure comprises 387 residues: Na(+)/H(+)-K(+) antiporter GerN (387 aa).

Transmembrane regions (helical) follow at residues 29–49 (PSVL…LGWI), 54–74 (LLTQ…GLET), 87–107 (LAVA…SGLV), 114–134 (NAVF…VQTL), 149–169 (LGAA…AMSF), 175–195 (VNLT…ILIG), 219–239 (ALII…AGII), 263–283 (PIAY…NITF), 290–310 (IWFI…GCGF), 324–344 (IIGA…GTGL), and 347–367 (GLLA…TTMI).

The protein belongs to the monovalent cation:proton antiporter 2 (CPA2) transporter (TC 2.A.37) family.

It is found in the membrane. In terms of biological role, na(+)/H(+) antiporter that extrudes sodium in exchange for external protons. Can also use potassium as a coupling ion, without completely replacing H(+). This Na(+)/H(+)-K(+) antiport is much more rapid than Na(+)/H(+) antiport. Can also extrude lithium. Important for the inosine-dependent germination of spores. The protein is Na(+)/H(+)-K(+) antiporter GerN (gerN) of Bacillus cereus.